A 119-amino-acid chain; its full sequence is cAMP-responsive element-binding protein-like 2 (119 aa).

Residues 1-23 (MDDSKIVAGKVKKPGKRGRKPAK) form a disordered region. Residues 10-21 (KVKKPGKRGRKP) are compositionally biased toward basic residues. A bZIP domain is found at 23–86 (KIDLKAKLER…LAMDQGKIPS (64 aa)). Residues 29–60 (KLERSRQSARECRARKKLRYQYLEELVSSKER) form a basic motif region. Residues 62-69 (ICALREEL) form a leucine-zipper region. The disordered stretch occupies residues 95 to 119 (DEQKTPQSCSNKTTKNSKYSSSSGI). Residues 102 to 119 (SCSNKTTKNSKYSSSSGI) show a composition bias toward low complexity.

It belongs to the bZIP family. ATF subfamily.

It localises to the nucleus. Its function is as follows. Probable regulator of creb1 transcriptional activity which is involved in adipose cells differentiation. May also play a regulatory role in the cell cycle. This is cAMP-responsive element-binding protein-like 2 (crebl2) from Danio rerio (Zebrafish).